Here is a 414-residue protein sequence, read N- to C-terminus: 2-acylphloroglucinol 4-prenyltransferase (414 aa).

The N-terminal 86 residues, 1–86 (MELSSVSSFS…LKPLSIFSCK (86 aa)), are a transit peptide targeting the chloroplast. The next 8 membrane-spanning stretches (helical) occupy residues 153–173 (FSWP…GSCF), 201–221 (ISVE…FILI), 229–249 (LLTS…VPPF), 256–276 (ITAF…VYYA), 281–301 (LGLA…ITFM), 336–356 (LLGT…AIIW), 359–379 (AFKS…LFFQ), and 394–414 (KSFY…YLFI).

The protein belongs to the UbiA prenyltransferase family. As to quaternary structure, component an active demethylxanthohumol (DMX) biosynthetic metabolon in glandular trichomes (lupulin glands) that encompasses a chalcone synthase (CHS) and a membrane-bound prenyltransferase. Interacts with PT2, forming a functional metabolon. Interacts with CHIL2; this interaction promotes catalytic activity. Requires Mg(2+) as cofactor. Expressed in trichomes.

It is found in the plastid. Its subcellular location is the chloroplast membrane. The catalysed reaction is 2',4,4',6'-tetrahydroxychalcone + dimethylallyl diphosphate = desmethylxanthohumol + diphosphate. The enzyme catalyses a 2-acylphloroglucinol + dimethylallyl diphosphate = a 2-acyl-4-prenylphloroglucinol + diphosphate. The protein operates within secondary metabolite biosynthesis. Stimulated by CHIL2 but inhibited by CHIL1. Involved in the biosynthesis of prenylated phenolics natural products which contribute to the bitter taste of beer and display broad biological activities. Catalyzes the first prenylation step in the beta-bitter acid pathway. Uses dimethylallyl diphosphate (DMAPP) as the prenyl donor. The chain is 2-acylphloroglucinol 4-prenyltransferase from Humulus lupulus (European hop).